We begin with the raw amino-acid sequence, 316 residues long: Acetyl-coenzyme A carboxylase carboxyl transferase subunit alpha (316 aa).

The CoA carboxyltransferase C-terminal domain occupies 35-292 (EIEILSQKLE…KTYVLQELKD (258 aa)).

It belongs to the AccA family. As to quaternary structure, acetyl-CoA carboxylase is a heterohexamer composed of biotin carboxyl carrier protein (AccB), biotin carboxylase (AccC) and two subunits each of ACCase subunit alpha (AccA) and ACCase subunit beta (AccD).

The protein resides in the cytoplasm. The enzyme catalyses N(6)-carboxybiotinyl-L-lysyl-[protein] + acetyl-CoA = N(6)-biotinyl-L-lysyl-[protein] + malonyl-CoA. It participates in lipid metabolism; malonyl-CoA biosynthesis; malonyl-CoA from acetyl-CoA: step 1/1. Functionally, component of the acetyl coenzyme A carboxylase (ACC) complex. First, biotin carboxylase catalyzes the carboxylation of biotin on its carrier protein (BCCP) and then the CO(2) group is transferred by the carboxyltransferase to acetyl-CoA to form malonyl-CoA. This is Acetyl-coenzyme A carboxylase carboxyl transferase subunit alpha from Alkaliphilus oremlandii (strain OhILAs) (Clostridium oremlandii (strain OhILAs)).